The chain runs to 318 residues: tRNA methyltransferase 10 homolog B (318 aa).

Over residues 1-10 the composition is skewed to basic and acidic residues; sequence MDCKSEESAQ. The tract at residues 1 to 105 is disordered; the sequence is MDCKSEESAQ…DPGNGTCPQH (105 aa). Polar residues predominate over residues 52–63; it reads SPANSAVWSSKN. Residues 64 to 83 show a composition bias toward basic residues; it reads MQRKQRHWERIVSSKKSKRK. A coiled-coil region spans residues 72–93; sequence ERIVSSKKSKRKQERERRKAKR. Basic and acidic residues predominate over residues 84–96; it reads QERERRKAKRAED. Residues 114–311 form the SAM-dependent MTase TRM10-type domain; sequence TKEKLLEAKH…KGVSPGKGYV (198 aa).

Belongs to the class IV-like SAM-binding methyltransferase superfamily. TRM10 family.

It catalyses the reaction guanosine(9) in tRNA + S-adenosyl-L-methionine = N(1)-methylguanosine(9) in tRNA + S-adenosyl-L-homocysteine + H(+). Its function is as follows. S-adenosyl-L-methionine-dependent guanine N(1)-methyltransferase that catalyzes the formation of N(1)-methylguanine at position 9 (m1G9) in tRNAs. Probably not able to catalyze formation of N(1)-methyladenine at position 9 (m1A9) in tRNAs. This Mus musculus (Mouse) protein is tRNA methyltransferase 10 homolog B (Trmt10b).